A 1197-amino-acid polypeptide reads, in one-letter code: ATP-dependent helicase/nuclease subunit A (1197 aa).

The 457-residue stretch at 2-458 (KNWTTEQQAA…IDLAKNFRSR (457 aa)) folds into the UvrD-like helicase ATP-binding domain. An ATP-binding site is contributed by 23–30 (AAAGSGKT). The region spanning 485–774 (RAALYQGASF…RIMSIHKSKG (290 aa)) is the UvrD-like helicase C-terminal domain.

It belongs to the helicase family. AddA subfamily. Heterodimer of AddA and AddB/RexB. The cofactor is Mg(2+).

The enzyme catalyses Couples ATP hydrolysis with the unwinding of duplex DNA by translocating in the 3'-5' direction.. It carries out the reaction ATP + H2O = ADP + phosphate + H(+). In terms of biological role, the heterodimer acts as both an ATP-dependent DNA helicase and an ATP-dependent, dual-direction single-stranded exonuclease. Recognizes the chi site generating a DNA molecule suitable for the initiation of homologous recombination. The AddA nuclease domain is required for chi fragment generation; this subunit has the helicase and 3' -&gt; 5' nuclease activities. The chain is ATP-dependent helicase/nuclease subunit A from Alkaliphilus metalliredigens (strain QYMF).